A 313-amino-acid chain; its full sequence is LUC7-related splicing factor homolog (313 aa).

The segment at 237–313 (RKEREEKLGS…RDRRDRDRRY (77 aa)) is disordered.

It belongs to the Luc7 family.

In Caenorhabditis elegans, this protein is LUC7-related splicing factor homolog.